The following is a 651-amino-acid chain: Acetyl-coenzyme A synthetase (651 aa).

CoA-binding positions include 190 to 193, threonine 309, and asparagine 333; that span reads RGGR. Residues 385 to 387, 409 to 414, aspartate 498, and arginine 513 each bind ATP; these read GEP and DTWWQT. Serine 521 serves as a coordination point for CoA. Arginine 524 contacts ATP. 3 residues coordinate Mg(2+): valine 535, histidine 537, and valine 540. Arginine 582 lines the CoA pocket. N6-acetyllysine is present on lysine 607.

This sequence belongs to the ATP-dependent AMP-binding enzyme family. Mg(2+) serves as cofactor. Acetylated. Deacetylation by the SIR2-homolog deacetylase activates the enzyme.

It carries out the reaction acetate + ATP + CoA = acetyl-CoA + AMP + diphosphate. Catalyzes the conversion of acetate into acetyl-CoA (AcCoA), an essential intermediate at the junction of anabolic and catabolic pathways. AcsA undergoes a two-step reaction. In the first half reaction, AcsA combines acetate with ATP to form acetyl-adenylate (AcAMP) intermediate. In the second half reaction, it can then transfer the acetyl group from AcAMP to the sulfhydryl group of CoA, forming the product AcCoA. In Xanthobacter autotrophicus (strain ATCC BAA-1158 / Py2), this protein is Acetyl-coenzyme A synthetase.